The sequence spans 248 residues: Ureidoacrylate amidohydrolase RutB (248 aa).

Asp41 acts as the Proton acceptor in catalysis. Lys150 is an active-site residue. Residue Cys183 is the Nucleophile of the active site.

Belongs to the isochorismatase family. RutB subfamily.

The enzyme catalyses (Z)-3-ureidoacrylate + H2O + H(+) = (Z)-3-aminoacrylate + NH4(+) + CO2. It carries out the reaction (Z)-3-ureidoacrylate + H2O = (Z)-3-aminoacrylate + carbamate + H(+). It catalyses the reaction (Z)-2-methylureidoacrylate + H2O + H(+) = (Z)-2-methylaminoacrylate + NH4(+) + CO2. Hydrolyzes ureidoacrylate to form aminoacrylate and carbamate. The carbamate hydrolyzes spontaneously, thereby releasing one of the nitrogen atoms of the pyrimidine ring as ammonia and one of its carbon atoms as CO2. The chain is Ureidoacrylate amidohydrolase RutB from Methylorubrum extorquens (strain CM4 / NCIMB 13688) (Methylobacterium extorquens).